The sequence spans 194 residues: Rho-related protein racC (194 aa).

13 residues coordinate GTP: alanine 17, glycine 19, lysine 20, threonine 21, cysteine 22, glutamate 34, tyrosine 36, threonine 39, glycine 64, lysine 120, aspartate 122, alanine 163, and lysine 164. Threonine 21 contributes to the Mg(2+) binding site. 2 short sequence motifs (switch) span residues 30–41 (RKFPEDYIPTVF) and 61–79 (DTAG…YSSA). Threonine 39 is a binding site for Mg(2+). Cysteine 191 carries the post-translational modification Cysteine methyl ester. Cysteine 191 is lipidated: S-geranylgeranyl cysteine. The propeptide at 192–194 (ALL) is removed in mature form.

The protein belongs to the small GTPase superfamily. Rho family. In terms of assembly, interacts (GTP-bound form) with PAK4 (via CRIB domain). Interacts (GTP-bound form) with PAK5 (via CRIB domain). Requires Mg(2+) as cofactor.

It localises to the cell membrane. The protein resides in the cytoplasm. Its subcellular location is the cytoskeleton. The catalysed reaction is GTP + H2O = GDP + phosphate + H(+). With respect to regulation, regulated by guanine nucleotide exchange factors (GEFs) which promote the exchange of bound GDP for free GTP, GTPase activating proteins (GAPs) which increase the GTP hydrolysis activity, and GDP dissociation inhibitors which inhibit the dissociation of the nucleotide from the GTPase. In terms of biological role, small GTPase which cycles between active GTP-bound and inactive GDP-bound states. This is Rho-related protein racC from Entamoeba histolytica (strain ATCC 30459 / HM-1:IMSS / ABRM).